The following is a 545-amino-acid chain: T-complex protein 1 subunit gamma (545 aa).

Met-1 is modified (N-acetylmethionine). The interval 1 to 24 (MMGHRPVLVLSQNTKRESGRKVQS) is disordered. The residue at position 11 (Ser-11) is a Phosphoserine. Lys-15 is covalently cross-linked (Glycyl lysine isopeptide (Lys-Gly) (interchain with G-Cter in SUMO2)). ADP is bound at residue Gly-42. Gly-42 is an ATP binding site. Asp-93 is a binding site for Mg(2+). ADP-binding residues include Gly-94, Thr-95, Thr-96, Ser-97, Thr-162, and Lys-163. ATP contacts are provided by Gly-94, Thr-95, and Thr-96. Ser-170 carries the phosphoserine modification. The residue at position 222 (Lys-222) is an N6-acetyllysine. Ser-243 and Ser-244 each carry phosphoserine. The residue at position 247 (Tyr-247) is a Phosphotyrosine. Residues Lys-248 and Lys-249 each participate in a glycyl lysine isopeptide (Lys-Gly) (interchain with G-Cter in SUMO2) cross-link. Ser-252 bears the Phosphoserine mark. The cysteines at positions 366 and 372 are disulfide-linked. Lys-381 is covalently cross-linked (Glycyl lysine isopeptide (Lys-Gly) (interchain with G-Cter in SUMO2)). Gly-411 is a binding site for ADP. Residue Gly-411 coordinates ATP. Phosphothreonine is present on residues Thr-430 and Thr-459. Residues Gly-482, Glu-483, Glu-497, and Lys-502 each coordinate ADP. Residue Gly-482 coordinates ATP. Glu-497 is a binding site for ATP. A disordered region spans residues 526-545 (HKKKGDDQSRQGGAPDAGQE).

Belongs to the TCP-1 chaperonin family. As to quaternary structure, component of the chaperonin-containing T-complex (TRiC), a hexadecamer composed of two identical back-to-back stacked rings enclosing a protein folding chamber. Each ring is made up of eight different subunits: TCP1/CCT1, CCT2, CCT3, CCT4, CCT5, CCT6A/CCT6, CCT7, CCT8. Interacts with PACRG. Interacts with DNAAF4. Interacts with DLEC1.

Its subcellular location is the cytoplasm. The enzyme catalyses ATP + H2O = ADP + phosphate + H(+). In terms of biological role, component of the chaperonin-containing T-complex (TRiC), a molecular chaperone complex that assists the folding of actin, tubulin and other proteins upon ATP hydrolysis. The TRiC complex mediates the folding of WRAP53/TCAB1, thereby regulating telomere maintenance. As part of the TRiC complex may play a role in the assembly of BBSome, a complex involved in ciliogenesis regulating transports vesicles to the cilia. In Pongo abelii (Sumatran orangutan), this protein is T-complex protein 1 subunit gamma (CCT3).